The chain runs to 230 residues: Cysteine S-methyltransferase OspZ (230 aa).

Residues 49-52 (GITR) are interaction with host proteins TAB2, TAB3 and ZRANB3. S-adenosyl-L-methionine-binding residues include Ala-92, Ser-98, Arg-107, Gln-111, Tyr-204, and Glu-208.

It belongs to the NleE/OspZ family. Monomer.

The protein resides in the secreted. It is found in the host cytoplasm. The protein localises to the host nucleus. It catalyses the reaction L-cysteinyl-[protein] + S-adenosyl-L-methionine = S-methyl-L-cysteinyl-[protein] + S-adenosyl-L-homocysteine + H(+). In terms of biological role, cysteine methyltransferase effector that inhibits host cell NF-kappa-B activation by preventing nuclear translocation of host protein RELA/p65. Acts by mediating cysteine methylation of host proteins TAB2 and TAB3: methylation of a conserved cysteine residue of the RanBP2-type zinc finger (NZF) of TAB2 and TAB3 disrupts zinc-binding, thereby inactivating the ubiquitin chain-binding activity of TAB2 and TAB3, leading to NF-kappa-B inactivation. Also mediates cysteine methylation of host protein ZRANB3, inactivating its ability to bind ubiquitin chains. The sequence is that of Cysteine S-methyltransferase OspZ from Shigella boydii.